A 205-amino-acid polypeptide reads, in one-letter code: Protein GrpE (205 aa).

Positions 1 to 18 (MSEEVKNSVETEENKASK) are enriched in basic and acidic residues. Positions 1–60 (MSEEVKNSVETEENKASKDNATQAPNPTENHNTAQETEKAENSEKTESATQENESLDKLK) are disordered. Over residues 19–35 (DNATQAPNPTENHNTAQ) the composition is skewed to polar residues. Residues 36–47 (ETEKAENSEKTE) are compositionally biased toward basic and acidic residues.

The protein belongs to the GrpE family. In terms of assembly, homodimer.

The protein localises to the cytoplasm. Functionally, participates actively in the response to hyperosmotic and heat shock by preventing the aggregation of stress-denatured proteins, in association with DnaK and GrpE. It is the nucleotide exchange factor for DnaK and may function as a thermosensor. Unfolded proteins bind initially to DnaJ; upon interaction with the DnaJ-bound protein, DnaK hydrolyzes its bound ATP, resulting in the formation of a stable complex. GrpE releases ADP from DnaK; ATP binding to DnaK triggers the release of the substrate protein, thus completing the reaction cycle. Several rounds of ATP-dependent interactions between DnaJ, DnaK and GrpE are required for fully efficient folding. This chain is Protein GrpE, found in Chloroherpeton thalassium (strain ATCC 35110 / GB-78).